Reading from the N-terminus, the 212-residue chain is Peptide methionine sulfoxide reductase MsrA (212 aa).

The active site involves C52.

The protein belongs to the MsrA Met sulfoxide reductase family.

It carries out the reaction L-methionyl-[protein] + [thioredoxin]-disulfide + H2O = L-methionyl-(S)-S-oxide-[protein] + [thioredoxin]-dithiol. It catalyses the reaction [thioredoxin]-disulfide + L-methionine + H2O = L-methionine (S)-S-oxide + [thioredoxin]-dithiol. In terms of biological role, has an important function as a repair enzyme for proteins that have been inactivated by oxidation. Catalyzes the reversible oxidation-reduction of methionine sulfoxide in proteins to methionine. The protein is Peptide methionine sulfoxide reductase MsrA of Salmonella agona (strain SL483).